Here is a 427-residue protein sequence, read N- to C-terminus: 3-phosphoshikimate 1-carboxyvinyltransferase (427 aa).

The 3-phosphoshikimate site is built by lysine 23, serine 24, and arginine 28. Residue lysine 23 participates in phosphoenolpyruvate binding. Residues glycine 97 and arginine 125 each coordinate phosphoenolpyruvate. The 3-phosphoshikimate site is built by serine 170, serine 171, glutamine 172, serine 198, aspartate 314, asparagine 337, and lysine 341. Glutamine 172 is a binding site for phosphoenolpyruvate. Aspartate 314 serves as the catalytic Proton acceptor. Phosphoenolpyruvate is bound by residues arginine 345, arginine 387, and lysine 412.

It belongs to the EPSP synthase family. Monomer.

The protein resides in the cytoplasm. It catalyses the reaction 3-phosphoshikimate + phosphoenolpyruvate = 5-O-(1-carboxyvinyl)-3-phosphoshikimate + phosphate. It participates in metabolic intermediate biosynthesis; chorismate biosynthesis; chorismate from D-erythrose 4-phosphate and phosphoenolpyruvate: step 6/7. Its function is as follows. Catalyzes the transfer of the enolpyruvyl moiety of phosphoenolpyruvate (PEP) to the 5-hydroxyl of shikimate-3-phosphate (S3P) to produce enolpyruvyl shikimate-3-phosphate and inorganic phosphate. This Buchnera aphidicola subsp. Baizongia pistaciae (strain Bp) protein is 3-phosphoshikimate 1-carboxyvinyltransferase.